The primary structure comprises 673 residues: ATP-dependent DNA helicase Rep (673 aa).

A UvrD-like helicase ATP-binding domain is found at 1 to 280; sequence MRLNPGQQQA…IKLEQNYRSS (280 aa). ATP contacts are provided by residues 22 to 29 and R278; that span reads AGAGSGKT. Residues 281-562 form the UvrD-like helicase C-terminal domain; the sequence is GRILKAANIL…QLMTLHASKG (282 aa).

Belongs to the helicase family. UvrD subfamily. Homodimer in association with DNA.

It catalyses the reaction Couples ATP hydrolysis with the unwinding of duplex DNA by translocating in the 3'-5' direction.. It carries out the reaction ATP + H2O = ADP + phosphate + H(+). Its activity is regulated as follows. Binding to DNA induces dimerization, which is required for DNA helicase activity. Helicase activity is stimulated by PriC. Its function is as follows. Rep helicase is a single-stranded (ss)DNA-dependent ATPase involved in DNA replication; it can initiate unwinding at a nick in the DNA. It binds to ssDNA and acts in a progressive fashion along the DNA in the 3' to 5' direction. Binds double-stranded (ds)DNA with a 5' ss- but not 3' ss-extension and forked structures with either lagging or leading ssDNA. Part of the PriC-Rep pathway for restart of stalled replication forks, which reloads the DnaB replicative helicase on sites other than the origin of replication. The protein is ATP-dependent DNA helicase Rep of Escherichia coli (strain K12).